The sequence spans 138 residues: Small ribosomal subunit protein uS8c (138 aa).

It belongs to the universal ribosomal protein uS8 family. Part of the 30S ribosomal subunit.

The protein localises to the plastid. It is found in the chloroplast. One of the primary rRNA binding proteins, it binds directly to 16S rRNA central domain where it helps coordinate assembly of the platform of the 30S subunit. This is Small ribosomal subunit protein uS8c (rps8) from Chlorella vulgaris (Green alga).